The chain runs to 393 residues: Zinc finger CCHC domain-containing protein 18 (393 aa).

2 disordered regions span residues 281–300 (VEPE…RGTA) and 313–341 (DDFD…RTRK). 2 stretches are compositionally biased toward polar residues: residues 291-300 (PGASSLRGTA) and 320-331 (PSTSSGSGQRNN). The CCHC-type zinc finger occupies 346-363 (IRCPHCGEEGHAKETCDN).

The protein belongs to the ZCCHC12 family.

This is Zinc finger CCHC domain-containing protein 18 from Mus musculus (Mouse).